The primary structure comprises 1522 residues: ATP-binding cassette sub-family C member 3 (1522 aa).

Residues 1 to 32 (MDRLCGSGELGSKFWDSNLTVYTNTPDLTPCF) are Extracellular-facing. N-linked (GlcNAc...) asparagine glycosylation occurs at Asn18. The helical transmembrane segment at 33–53 (QNSLLAWVPCIYLWAALPCYL) threads the bilayer. Residues 54–73 (FYLRHHRLGYIVLSCLSRLK) are Cytoplasmic-facing. The helical transmembrane segment at 74-94 (TALGVLLWCISWVDLFYSFHG) threads the bilayer. The Extracellular portion of the chain corresponds to 95–99 (LVHGS). A helical membrane pass occupies residues 100–120 (SPAPVFFITPLLVGITMLLAT). Over 121–132 (LLIQYERLRGVR) the chain is Cytoplasmic. The chain crosses the membrane as a helical span at residues 133 to 153 (SSGVLIIFWLLCVICAIIPFR). Residues 154–171 (SKILLALAEGKILDPFRF) are Extracellular-facing. A helical transmembrane segment spans residues 172–192 (TTFYIYFALVLCAFILSCFQE). The Cytoplasmic portion of the chain corresponds to 193 to 301 (KPPLFSPENL…KTKKPSFLRA (109 aa)). Residues 302–322 (LVRTFTSSLLMGACFKLIQDL) traverse the membrane as a helical segment. An ABC transmembrane type-1 1 domain is found at 310–592 (LLMGACFKLI…LPQLISGMTQ (283 aa)). The Extracellular segment spans residues 323 to 347 (SPSSTHSCSASSSGLFRPHGPYWWG). Residues 348–368 (FLLAGLMFVSSTMQTLILHQH) traverse the membrane as a helical segment. Residues 369-424 (YHCIFVMALRIRTAIIGVIYRKALTITNSVKREYTVGEMVNLMSVDAQRFMDVSPF) are Cytoplasmic-facing. The chain crosses the membrane as a helical span at residues 425–445 (INLLWSAPLQVILAIYFLWQI). Residues 446-448 (LGP) are Extracellular-facing. Residues 449 to 469 (SALAGVAVIVLLIPLNGAVSM) form a helical membrane-spanning segment. The Cytoplasmic segment spans residues 470–531 (KMKTYQVQQM…LLRKGAYLQA (62 aa)). The helical transmembrane segment at 532-552 (ISTFIWVCTPFMVTLITLGVY) threads the bilayer. The Extracellular segment spans residues 553–574 (VCVDKNNVLDAEKAFVSLSLFN). The chain crosses the membrane as a helical span at residues 575-595 (ILKIPLNLLPQLISGMTQTSV). Over 596–958 (SLKRIQDFLN…VKLSVYWDYA (363 aa)) the chain is Cytoplasmic. The 225-residue stretch at 625 to 849 (ITIHNGTFSW…DGSFANFLRN (225 aa)) folds into the ABC transporter 1 domain. 659-666 (GPVGCGKS) contacts ATP. Ser902 and Ser905 each carry phosphoserine. Residues 959-979 (KSVGLCTTLFICLLYAGQNAV) form a helical membrane-spanning segment. The region spanning 966–1247 (TLFICLLYAG…MIRTLSDLES (282 aa)) is the ABC transmembrane type-1 2 domain. At 980–1016 (AIGANVWLSAWTNDVEEHGQQNNTSVRLGVYATLGIL) the chain is on the extracellular side. N-linked (GlcNAc...) asparagine glycosylation is found at Asn1001 and Asn1002. The chain crosses the membrane as a helical span at residues 1017–1037 (QGLLVMLSAFTMVVGAIQAAR). The Cytoplasmic segment spans residues 1038–1080 (LLHTALLHNQIRAPQSFFDTTPSGRILNRFSKDIYVIHEVLAP). Residues 1081-1101 (TILMLFNSFYTSISTIVVIVA) traverse the membrane as a helical segment. Position 1102 (Ser1102) is a topological domain, extracellular. A helical transmembrane segment spans residues 1103–1123 (TPLFCVVVLPLAVFYGFVQRF). Over 1124–1194 (YVATSRQLKR…ASNRWLGVHV (71 aa)) the chain is Cytoplasmic. A helical transmembrane segment spans residues 1195–1215 (EFVGNCVVLFSALFAVIGRNS). The Extracellular segment spans residues 1216 to 1217 (LN). The chain crosses the membrane as a helical span at residues 1218-1238 (PGLVGLSVSYALQVTLSLNWM). The Cytoplasmic segment spans residues 1239–1522 (IRTLSDLESN…YGMAKDAGLA (284 aa)). The ABC transporter 2 domain occupies 1286 to 1518 (FRNYSVRYRP…GGIFYGMAKD (233 aa)). 1318–1325 (GRTGAGKS) serves as a coordination point for ATP.

The protein belongs to the ABC transporter superfamily. ABCC family. Conjugate transporter (TC 3.A.1.208) subfamily. As to expression, expressed in lung, ileum, colon and liver. Higher in liver of Eisai hyperbilirubinemic rats.

Its subcellular location is the basolateral cell membrane. The protein localises to the basal cell membrane. It carries out the reaction an S-substituted glutathione(in) + ATP + H2O = an S-substituted glutathione(out) + ADP + phosphate + H(+). The catalysed reaction is ATP + H2O + xenobioticSide 1 = ADP + phosphate + xenobioticSide 2.. The enzyme catalyses taurocholate(in) + ATP + H2O = taurocholate(out) + ADP + phosphate + H(+). It catalyses the reaction glycocholate(in) + ATP + H2O = glycocholate(out) + ADP + phosphate + H(+). It carries out the reaction taurolithocholate 3-sulfate(in) + ATP + H2O = taurolithocholate 3-sulfate(out) + ADP + phosphate + H(+). The catalysed reaction is 17beta-estradiol 17-O-(beta-D-glucuronate)(in) + ATP + H2O = 17beta-estradiol 17-O-(beta-D-glucuronate)(out) + ADP + phosphate + H(+). The enzyme catalyses dehydroepiandrosterone 3-sulfate(in) + ATP + H2O = dehydroepiandrosterone 3-sulfate(out) + ADP + phosphate + H(+). It catalyses the reaction leukotriene C4(in) + ATP + H2O = leukotriene C4(out) + ADP + phosphate + H(+). It carries out the reaction (4Z,15Z)-bilirubin IXalpha C8-beta-D-glucuronoside(in) + ATP + H2O = (4Z,15Z)-bilirubin IXalpha C8-beta-D-glucuronoside(out) + ADP + phosphate + H(+). The catalysed reaction is (4Z,15Z)-bilirubin IXalpha C8,C12-beta-D-bisglucuronoside(in) + ATP + H2O = (4Z,15Z)-bilirubin IXalpha C8,C12-beta-D-bisglucuronoside(out) + ADP + phosphate + H(+). The enzyme catalyses taurochenodeoxycholate 3-sulfate(in) + ATP + H2O = taurochenodeoxycholate 3-sulfate(out) + ADP + phosphate + H(+). ATP-dependent transporter of the ATP-binding cassette (ABC) family that binds and hydrolyzes ATP to enable active transport of various substrates including many drugs, toxicants and endogenous compound across cell membranes. Transports glucuronide conjugates such as bilirubin diglucuronide, estradiol-17-beta-o-glucuronide and GSH conjugates such as leukotriene C4 (LTC4). Transports also various bile salts (taurocholate, glycocholate, taurochenodeoxycholate-3-sulfate, taurolithocholate- 3-sulfate). Does not contribute substantially to bile salt physiology but provides an alternative route for the export of bile acids and glucuronides from cholestatic hepatocytes. May contribute to regulate the transport of organic compounds in testes across the blood-testis-barrier. The sequence is that of ATP-binding cassette sub-family C member 3 (Abcc3) from Rattus norvegicus (Rat).